A 204-amino-acid polypeptide reads, in one-letter code: Large ribosomal subunit protein uL22m (204 aa).

The N-terminal 27 residues, 1–27 (MAASITASVWGTLLKIHRGLTASGCLP), are a transit peptide targeting the mitochondrion.

It belongs to the universal ribosomal protein uL22 family. As to quaternary structure, component of the mitochondrial ribosome large subunit (39S) which comprises a 16S rRNA and about 50 distinct proteins.

The protein resides in the mitochondrion. This Xenopus tropicalis (Western clawed frog) protein is Large ribosomal subunit protein uL22m (mrpl22).